Consider the following 111-residue polypeptide: WAP four-disulfide core domain protein 12 (111 aa).

Positions 1 to 23 are cleaved as a signal peptide; that stretch reads MGSSSFLVLMVSLTLVTLVAVEG. The region spanning 27–74 is the WAP domain; sequence DIEKAGVCPADNVRCFKSDPPQCHTDQDCLGERKCCYLHCGFKCVIPV. 4 disulfides stabilise this stretch: Cys34–Cys62, Cys41–Cys66, Cys49–Cys61, and Cys55–Cys70. The disordered stretch occupies residues 80–111; sequence GGNKDEDVSRPYPEPGWEAKCPGSSSTRCPQK. Polar residues predominate over residues 102–111; the sequence is GSSSTRCPQK.

Its subcellular location is the secreted. In terms of biological role, antibacterial protein. Putative acid-stable proteinase inhibitor. This chain is WAP four-disulfide core domain protein 12 (WFDC12), found in Pan troglodytes (Chimpanzee).